The sequence spans 327 residues: Phenylalanine--tRNA ligase alpha subunit (327 aa).

Position 252 (Glu-252) interacts with Mg(2+).

Belongs to the class-II aminoacyl-tRNA synthetase family. Phe-tRNA synthetase alpha subunit type 1 subfamily. Tetramer of two alpha and two beta subunits. The cofactor is Mg(2+).

Its subcellular location is the cytoplasm. It carries out the reaction tRNA(Phe) + L-phenylalanine + ATP = L-phenylalanyl-tRNA(Phe) + AMP + diphosphate + H(+). The sequence is that of Phenylalanine--tRNA ligase alpha subunit from Aeromonas salmonicida (strain A449).